The sequence spans 88 residues: Large ribosomal subunit protein eL31 (88 aa).

It belongs to the eukaryotic ribosomal protein eL31 family.

The chain is Large ribosomal subunit protein eL31 (rpl31e) from Sulfurisphaera tokodaii (strain DSM 16993 / JCM 10545 / NBRC 100140 / 7) (Sulfolobus tokodaii).